Here is a 362-residue protein sequence, read N- to C-terminus: 3-dehydroquinate synthase (362 aa).

NAD(+) is bound by residues 74-79 (DGEGYK), 108-112 (GVIGD), 132-133 (TT), K145, K154, and 172-175 (TLDT). Residues E187, H250, and H267 each contribute to the Zn(2+) site.

The protein belongs to the sugar phosphate cyclases superfamily. Dehydroquinate synthase family. Requires Co(2+) as cofactor. It depends on Zn(2+) as a cofactor. NAD(+) serves as cofactor.

It localises to the cytoplasm. The enzyme catalyses 7-phospho-2-dehydro-3-deoxy-D-arabino-heptonate = 3-dehydroquinate + phosphate. It participates in metabolic intermediate biosynthesis; chorismate biosynthesis; chorismate from D-erythrose 4-phosphate and phosphoenolpyruvate: step 2/7. Functionally, catalyzes the conversion of 3-deoxy-D-arabino-heptulosonate 7-phosphate (DAHP) to dehydroquinate (DHQ). In Geobacter sp. (strain M21), this protein is 3-dehydroquinate synthase.